The chain runs to 1188 residues: Integrin alpha-11 (1188 aa).

The signal sequence occupies residues 1 to 22 (MDLPRGLVVAWALSLWPGFTDT). Topologically, residues 23-1141 (FNMDTRKPRV…ISKQEDWQVP (1119 aa)) are extracellular. 2 FG-GAP repeats span residues 24–85 (NMDT…NCTK) and 91–151 (VTLS…FSKT). Residues cysteine 76 and cysteine 83 are joined by a disulfide bond. N-linked (GlcNAc...) asparagine glycans are attached at residues asparagine 82 and asparagine 95. Cystine bridges form between cysteine 121-cysteine 139 and cysteine 129-cysteine 159. The VWFA domain occupies 164 to 345 (DIVIVLDGSN…AALKDIVDAL (182 aa)). Asparagine 291, asparagine 331, asparagine 358, asparagine 449, and asparagine 462 each carry an N-linked (GlcNAc...) asparagine glycan. FG-GAP repeat units follow at residues 355–406 (TNKN…VIPL), 411–461 (LKEF…TMHN), 462–527 (NRSL…LFVY), 528–586 (NGTL…SILK), and 590–650 (QRIT…FEPS). Positions 488, 490, 492, and 496 each coordinate Ca(2+). An N-linked (GlcNAc...) asparagine glycan is attached at asparagine 528. Positions 551, 553, 555, 559, 613, 615, 617, and 621 each coordinate Ca(2+). Asparagine 642 carries N-linked (GlcNAc...) asparagine glycosylation. Intrachain disulfides connect cysteine 659–cysteine 668, cysteine 674–cysteine 729, and cysteine 781–cysteine 787. The N-linked (GlcNAc...) asparagine glycan is linked to asparagine 694. Asparagine 857 carries N-linked (GlcNAc...) asparagine glycosylation. Cysteine 881 and cysteine 893 are joined by a disulfide. 5 N-linked (GlcNAc...) asparagine glycosylation sites follow: asparagine 894, asparagine 973, asparagine 1031, asparagine 1039, and asparagine 1059. Residues 1142–1164 (IWIIVGSTLGGLLLLALLVLALW) traverse the membrane as a helical segment. At 1165 to 1188 (KLGFFRSARRRREPGLDPTPKVLE) the chain is on the cytoplasmic side.

The protein belongs to the integrin alpha chain family. As to quaternary structure, heterodimer of an alpha and a beta subunit. Alpha-11 associates with beta-1. Interacts with RAB21. As to expression, according to PubMed:10464311, highest levels of expression in uterus and heart, intermediate levels in skeletal muscle and intermediate to low levels in pancreas, kidney and placenta. According to PubMed:10486209, also found in brain, colon, lung, small intestine, stomach, testis, salivary glands, thyroid glands and prostate. Very low levels in peripheral blood lymphocytes, fetal brain and fetal liver.

It localises to the membrane. In terms of biological role, integrin alpha-11/beta-1 is a receptor for collagen. The chain is Integrin alpha-11 (ITGA11) from Homo sapiens (Human).